The following is a 750-amino-acid chain: Polyribonucleotide nucleotidyltransferase (750 aa).

Mg(2+) contacts are provided by Asp-519 and Asp-525. In terms of domain architecture, KH spans 585-644 (PRVIAVKIPVDKIGEVIGPKGKMINQIQEDTGADISIEDDGTVYIGATNGPSADAARSAI). In terms of domain architecture, S1 motif spans 656-728 (GERYLGTVVK…DRGKLSLSPV (73 aa)). The disordered stretch occupies residues 725–750 (LSPVVAEEEGAASEDAPAEAAEESAE). The span at 730-750 (AEEEGAASEDAPAEAAEESAE) shows a compositional bias: acidic residues.

This sequence belongs to the polyribonucleotide nucleotidyltransferase family. Mg(2+) serves as cofactor.

It is found in the cytoplasm. The catalysed reaction is RNA(n+1) + phosphate = RNA(n) + a ribonucleoside 5'-diphosphate. Its function is as follows. Involved in mRNA degradation. Catalyzes the phosphorolysis of single-stranded polyribonucleotides processively in the 3'- to 5'-direction. This Paenarthrobacter aurescens (strain TC1) protein is Polyribonucleotide nucleotidyltransferase.